The following is a 146-amino-acid chain: FAD synthase (146 aa).

Residues 9 to 10 (TF), 14 to 17 (HPGH), and Asp92 contribute to the ATP site.

The protein belongs to the archaeal FAD synthase family. Homodimer. Requires a divalent metal cation as cofactor.

The catalysed reaction is FMN + ATP + H(+) = FAD + diphosphate. It functions in the pathway cofactor biosynthesis; FAD biosynthesis; FAD from FMN: step 1/1. Catalyzes the transfer of the AMP portion of ATP to flavin mononucleotide (FMN) to produce flavin adenine dinucleotide (FAD) coenzyme. The chain is FAD synthase from Halobacterium salinarum (strain ATCC 29341 / DSM 671 / R1).